The sequence spans 398 residues: 8-amino-7-oxononanoate synthase (398 aa).

Arg26 serves as a coordination point for substrate. A pyridoxal 5'-phosphate-binding site is contributed by 113–114 (GF). His138 contacts substrate. The pyridoxal 5'-phosphate site is built by Ser181, His209, and Thr238. Residue Lys241 is modified to N6-(pyridoxal phosphate)lysine. Thr355 lines the substrate pocket.

The protein belongs to the class-II pyridoxal-phosphate-dependent aminotransferase family. BioF subfamily. Homodimer. Pyridoxal 5'-phosphate is required as a cofactor.

The catalysed reaction is 6-carboxyhexanoyl-[ACP] + L-alanine + H(+) = (8S)-8-amino-7-oxononanoate + holo-[ACP] + CO2. It participates in cofactor biosynthesis; biotin biosynthesis. Catalyzes the decarboxylative condensation of pimeloyl-[acyl-carrier protein] and L-alanine to produce 8-amino-7-oxononanoate (AON), [acyl-carrier protein], and carbon dioxide. The protein is 8-amino-7-oxononanoate synthase of Aeromonas hydrophila subsp. hydrophila (strain ATCC 7966 / DSM 30187 / BCRC 13018 / CCUG 14551 / JCM 1027 / KCTC 2358 / NCIMB 9240 / NCTC 8049).